Here is a 476-residue protein sequence, read N- to C-terminus: Argininosuccinate lyase (476 aa).

This sequence belongs to the lyase 1 family. Argininosuccinate lyase subfamily.

It localises to the cytoplasm. It carries out the reaction 2-(N(omega)-L-arginino)succinate = fumarate + L-arginine. It functions in the pathway amino-acid biosynthesis; L-arginine biosynthesis; L-arginine from L-ornithine and carbamoyl phosphate: step 3/3. The polypeptide is Argininosuccinate lyase (Nitrosospira multiformis (strain ATCC 25196 / NCIMB 11849 / C 71)).